Reading from the N-terminus, the 149-residue chain is Transcriptional regulator MraZ (149 aa).

SpoVT-AbrB domains are found at residues 7–54 (KYIN…GIAH) and 83–126 (AVQL…QPQN).

Belongs to the MraZ family. As to quaternary structure, forms oligomers.

The protein resides in the cytoplasm. It localises to the nucleoid. This Rickettsia typhi (strain ATCC VR-144 / Wilmington) protein is Transcriptional regulator MraZ.